A 288-amino-acid polypeptide reads, in one-letter code: tRNA-cytidine(32) 2-sulfurtransferase (288 aa).

The short motif at 70–75 (SGGKDS) is the PP-loop motif element. C145, C148, and C236 together coordinate [4Fe-4S] cluster.

This sequence belongs to the TtcA family. As to quaternary structure, homodimer. Requires Mg(2+) as cofactor. It depends on [4Fe-4S] cluster as a cofactor.

Its subcellular location is the cytoplasm. It catalyses the reaction cytidine(32) in tRNA + S-sulfanyl-L-cysteinyl-[cysteine desulfurase] + AH2 + ATP = 2-thiocytidine(32) in tRNA + L-cysteinyl-[cysteine desulfurase] + A + AMP + diphosphate + H(+). It functions in the pathway tRNA modification. In terms of biological role, catalyzes the ATP-dependent 2-thiolation of cytidine in position 32 of tRNA, to form 2-thiocytidine (s(2)C32). The sulfur atoms are provided by the cysteine/cysteine desulfurase (IscS) system. This is tRNA-cytidine(32) 2-sulfurtransferase from Bartonella tribocorum (strain CIP 105476 / IBS 506).